The chain runs to 565 residues: Dihydroxy-acid dehydratase (565 aa).

Cysteine 50 provides a ligand contact to [2Fe-2S] cluster. Aspartate 82 is a Mg(2+) binding site. Cysteine 123 contributes to the [2Fe-2S] cluster binding site. Mg(2+)-binding residues include aspartate 124 and lysine 125. N6-carboxylysine is present on lysine 125. Residue cysteine 195 participates in [2Fe-2S] cluster binding. Position 447 (glutamate 447) interacts with Mg(2+). Serine 473 functions as the Proton acceptor in the catalytic mechanism.

Belongs to the IlvD/Edd family. Homodimer. Requires [2Fe-2S] cluster as cofactor. Mg(2+) serves as cofactor.

It catalyses the reaction (2R)-2,3-dihydroxy-3-methylbutanoate = 3-methyl-2-oxobutanoate + H2O. The catalysed reaction is (2R,3R)-2,3-dihydroxy-3-methylpentanoate = (S)-3-methyl-2-oxopentanoate + H2O. It functions in the pathway amino-acid biosynthesis; L-isoleucine biosynthesis; L-isoleucine from 2-oxobutanoate: step 3/4. The protein operates within amino-acid biosynthesis; L-valine biosynthesis; L-valine from pyruvate: step 3/4. Functionally, functions in the biosynthesis of branched-chain amino acids. Catalyzes the dehydration of (2R,3R)-2,3-dihydroxy-3-methylpentanoate (2,3-dihydroxy-3-methylvalerate) into 2-oxo-3-methylpentanoate (2-oxo-3-methylvalerate) and of (2R)-2,3-dihydroxy-3-methylbutanoate (2,3-dihydroxyisovalerate) into 2-oxo-3-methylbutanoate (2-oxoisovalerate), the penultimate precursor to L-isoleucine and L-valine, respectively. The protein is Dihydroxy-acid dehydratase of Halorhodospira halophila (strain DSM 244 / SL1) (Ectothiorhodospira halophila (strain DSM 244 / SL1)).